We begin with the raw amino-acid sequence, 243 residues long: Vesicle-associated membrane protein-associated protein B/C (243 aa).

An N-acetylalanine modification is found at A2. Over 2-222 the chain is Cytoplasmic; sequence AKVEQVLSLE…PTGKEEGLST (221 aa). An MSP domain is found at 7–124; that stretch reads VLSLEPQHEL…MDSKLRCVFE (118 aa). S146 carries the post-translational modification Phosphoserine. K147 participates in a covalent cross-link: Glycyl lysine isopeptide (Lys-Gly) (interchain with G-Cter in SUMO1). T150 carries the post-translational modification Phosphothreonine. Residues S156, S158, S159, S160, and S206 each carry the phosphoserine modification. Residues 159-196 are a coiled coil; that stretch reads SSLDDTEVKKVMEECKRLQGEVQRLREENKQFKEEDGL. The chain crosses the membrane as a helical; Anchor for type IV membrane protein span at residues 223–243; it reads RLLALVVLFFIVGVIIGKIAL.

Belongs to the VAMP-associated protein (VAP) (TC 9.B.17) family. In terms of assembly, homodimer, and heterodimer with VAPA. Interacts with VAMP1 and VAMP2. Interacts (via MSP domain) with ZFYVE27. Interacts with RMDN3. Interacts with KIF5A in a ZFYVE27-dependent manner. Interacts (via MSP domain) with STARD3 (via phospho-FFAT motif). Interacts with STARD3NL (via FFAT motif). Interacts with CERT1. Interacts with PLEKHA3 and SACM1L to form a ternary complex. Interacts with VPS13A (via FFAT motif). Interacts with RB1CC1 (via phosphorylated FFAT motif), MIGA2 (via phosphorylated FFAT motif), RMDN3 (via phosphorylated FFAT motif), OSBPL1A (via FFAT motif), KCNB1 (via phosphorylated FFAT motif) and KCNB2 (via phosphorylated FFAT motif). Interacts (via MSP domain) with WDR44 (via FFAT motif); the interactions connect the endoplasmic reticulum (ER) with the endosomal tubule. (Microbial infection) Interacts (via MSP domain) with hepatitis C virus (HCV) non-structural protein 5A (via disordered domain D3). Interacts with HCV RNA-directed RNA polymerase. As to expression, ubiquitous. Isoform 1 predominates.

The protein resides in the endoplasmic reticulum membrane. Endoplasmic reticulum (ER)-anchored protein that mediates the formation of contact sites between the ER and endosomes via interaction with FFAT motif-containing proteins such as STARD3 or WDR44. Interacts with STARD3 in a FFAT motif phosphorylation dependent manner. Via interaction with WDR44 participates in neosynthesized protein export. Participates in the endoplasmic reticulum unfolded protein response (UPR) by inducing ERN1/IRE1 activity. Involved in cellular calcium homeostasis regulation. The chain is Vesicle-associated membrane protein-associated protein B/C from Homo sapiens (Human).